The chain runs to 504 residues: D-alanine--D-alanyl carrier protein ligase (504 aa).

152–153 (TS) lines the ATP pocket. D197 serves as a coordination point for D-alanine. Position 292-297 (292-297 (NTYGPT)) interacts with ATP. V301 serves as a coordination point for D-alanine. ATP contacts are provided by residues D383, 394–397 (YNGR), and K492. K492 serves as a coordination point for D-alanine.

It belongs to the ATP-dependent AMP-binding enzyme family. DltA subfamily.

It is found in the cytoplasm. It catalyses the reaction holo-[D-alanyl-carrier protein] + D-alanine + ATP = D-alanyl-[D-alanyl-carrier protein] + AMP + diphosphate. Its pathway is cell wall biogenesis; lipoteichoic acid biosynthesis. Functionally, catalyzes the first step in the D-alanylation of lipoteichoic acid (LTA), the activation of D-alanine and its transfer onto the D-alanyl carrier protein (Dcp) DltC. In an ATP-dependent two-step reaction, forms a high energy D-alanyl-AMP intermediate, followed by transfer of the D-alanyl residue as a thiol ester to the phosphopantheinyl prosthetic group of the Dcp. D-alanylation of LTA plays an important role in modulating the properties of the cell wall in Gram-positive bacteria, influencing the net charge of the cell wall. The protein is D-alanine--D-alanyl carrier protein ligase of Bacillus cereus (strain B4264).